Consider the following 92-residue polypeptide: Small ribosomal subunit protein bS18 (92 aa).

The tract at residues 1 to 22 is disordered; it reads MADERAPQRSTSGPRKKRPFQR.

Belongs to the bacterial ribosomal protein bS18 family. As to quaternary structure, part of the 30S ribosomal subunit. Forms a tight heterodimer with protein bS6.

Its function is as follows. Binds as a heterodimer with protein bS6 to the central domain of the 16S rRNA, where it helps stabilize the platform of the 30S subunit. The protein is Small ribosomal subunit protein bS18 of Citrifermentans bemidjiense (strain ATCC BAA-1014 / DSM 16622 / JCM 12645 / Bem) (Geobacter bemidjiensis).